We begin with the raw amino-acid sequence, 587 residues long: Putative inactive receptor-like protein kinase At1g64210 (587 aa).

Residues 1-19 form the signal peptide; the sequence is MQIFLFFFSLILCFVLISS. Residues 20 to 232 are Extracellular-facing; that stretch reads QTLEDDKKAL…KTPFGLSQLA (213 aa). N37 and N44 each carry an N-linked (GlcNAc...) asparagine glycan. 5 LRR repeats span residues 89-112, 113-136, 137-160, 161-183, and 184-205; these read SLKF…TNLK, SLTH…SELK, NLKV…SGLT, SLQV…HLPK, and LSQI…LQRF. N-linked (GlcNAc...) asparagine glycosylation is found at N149, N169, N188, and N214. Residues 233 to 253 traverse the membrane as a helical segment; that stretch reads FLLILSAACVLCVSGLSFIMI. The Cytoplasmic segment spans residues 254-587; it reads TCFGKTRISG…IEDIRSVDAE (334 aa). The Protein kinase domain maps to 307–581; the sequence is SSSAEVLGKG…AQVLKLIEDI (275 aa). S309 bears the Phosphoserine mark. ATP-binding positions include 313–321 and K335; that span reads LGKGAFGTT. S386 is subject to Phosphoserine. Residues T462, T463, T466, and T477 each carry the phosphothreonine modification.

Its subcellular location is the cell membrane. This chain is Putative inactive receptor-like protein kinase At1g64210, found in Arabidopsis thaliana (Mouse-ear cress).